We begin with the raw amino-acid sequence, 316 residues long: Bifunctional protein FolD (316 aa).

NADP(+) is bound by residues 165–167 (GKS) and isoleucine 231.

It belongs to the tetrahydrofolate dehydrogenase/cyclohydrolase family. In terms of assembly, homodimer.

It catalyses the reaction (6R)-5,10-methylene-5,6,7,8-tetrahydrofolate + NADP(+) = (6R)-5,10-methenyltetrahydrofolate + NADPH. The enzyme catalyses (6R)-5,10-methenyltetrahydrofolate + H2O = (6R)-10-formyltetrahydrofolate + H(+). It functions in the pathway one-carbon metabolism; tetrahydrofolate interconversion. Functionally, catalyzes the oxidation of 5,10-methylenetetrahydrofolate to 5,10-methenyltetrahydrofolate and then the hydrolysis of 5,10-methenyltetrahydrofolate to 10-formyltetrahydrofolate. This chain is Bifunctional protein FolD, found in Sphingobium chlorophenolicum.